The following is a 347-amino-acid chain: NADH-ubiquinone oxidoreductase chain 2 (347 aa).

10 helical membrane passes run M1–M21, H25–M45, Y59–M79, I96–P116, I148–G168, I178–P198, L200–I220, M237–L257, N274–M294, and L326–L346.

Belongs to the complex I subunit 2 family. Core subunit of respiratory chain NADH dehydrogenase (Complex I) which is composed of 45 different subunits. Interacts with TMEM242.

Its subcellular location is the mitochondrion inner membrane. It catalyses the reaction a ubiquinone + NADH + 5 H(+)(in) = a ubiquinol + NAD(+) + 4 H(+)(out). Its function is as follows. Core subunit of the mitochondrial membrane respiratory chain NADH dehydrogenase (Complex I) which catalyzes electron transfer from NADH through the respiratory chain, using ubiquinone as an electron acceptor. Essential for the catalytic activity and assembly of complex I. The sequence is that of NADH-ubiquinone oxidoreductase chain 2 from Gardnerycteris crenulata (Striped hairy-nosed bat).